The chain runs to 93 residues: Co-chaperonin GroES (93 aa).

Belongs to the GroES chaperonin family. Heptamer of 7 subunits arranged in a ring. Interacts with the chaperonin GroEL.

The protein localises to the cytoplasm. Functionally, together with the chaperonin GroEL, plays an essential role in assisting protein folding. The GroEL-GroES system forms a nano-cage that allows encapsulation of the non-native substrate proteins and provides a physical environment optimized to promote and accelerate protein folding. GroES binds to the apical surface of the GroEL ring, thereby capping the opening of the GroEL channel. In Streptococcus sanguinis, this protein is Co-chaperonin GroES.